Here is a 335-residue protein sequence, read N- to C-terminus: Holliday junction branch migration complex subunit RuvB (335 aa).

Residues 1–183 (MDERIISSET…FGVIDHLEFY (183 aa)) form a large ATPase domain (RuvB-L) region. ATP is bound by residues Leu22, Arg23, Gly64, Lys67, Thr68, Thr69, 130 to 132 (EDY), Arg173, Tyr183, and Arg220. Residue Thr68 participates in Mg(2+) binding. A small ATPAse domain (RuvB-S) region spans residues 184–254 (TEEQLTEIVL…LAKEALTLLQ (71 aa)). Residues 257-335 (PRGLDTIDQK…HLGISYEKEV (79 aa)) form a head domain (RuvB-H) region. Residues Arg293, Arg312, and Arg317 each coordinate DNA.

Belongs to the RuvB family. In terms of assembly, homohexamer. Forms an RuvA(8)-RuvB(12)-Holliday junction (HJ) complex. HJ DNA is sandwiched between 2 RuvA tetramers; dsDNA enters through RuvA and exits via RuvB. An RuvB hexamer assembles on each DNA strand where it exits the tetramer. Each RuvB hexamer is contacted by two RuvA subunits (via domain III) on 2 adjacent RuvB subunits; this complex drives branch migration. In the full resolvosome a probable DNA-RuvA(4)-RuvB(12)-RuvC(2) complex forms which resolves the HJ.

It is found in the cytoplasm. It catalyses the reaction ATP + H2O = ADP + phosphate + H(+). Functionally, the RuvA-RuvB-RuvC complex processes Holliday junction (HJ) DNA during genetic recombination and DNA repair, while the RuvA-RuvB complex plays an important role in the rescue of blocked DNA replication forks via replication fork reversal (RFR). RuvA specifically binds to HJ cruciform DNA, conferring on it an open structure. The RuvB hexamer acts as an ATP-dependent pump, pulling dsDNA into and through the RuvAB complex. RuvB forms 2 homohexamers on either side of HJ DNA bound by 1 or 2 RuvA tetramers; 4 subunits per hexamer contact DNA at a time. Coordinated motions by a converter formed by DNA-disengaged RuvB subunits stimulates ATP hydrolysis and nucleotide exchange. Immobilization of the converter enables RuvB to convert the ATP-contained energy into a lever motion, pulling 2 nucleotides of DNA out of the RuvA tetramer per ATP hydrolyzed, thus driving DNA branch migration. The RuvB motors rotate together with the DNA substrate, which together with the progressing nucleotide cycle form the mechanistic basis for DNA recombination by continuous HJ branch migration. Branch migration allows RuvC to scan DNA until it finds its consensus sequence, where it cleaves and resolves cruciform DNA. In Listeria innocua serovar 6a (strain ATCC BAA-680 / CLIP 11262), this protein is Holliday junction branch migration complex subunit RuvB.